Consider the following 440-residue polypeptide: L-gulonolactone oxidase (440 aa).

Residues 17-187 (YSCEPELYFE…LNVTIQCVPA (171 aa)) enclose the FAD-binding PCMH-type domain. A Pros-8alpha-FAD histidine modification is found at histidine 54. A helical membrane pass occupies residues 245-267 (WFWNYAIGYYLLEFLLWISVFVP).

This sequence belongs to the oxygen-dependent FAD-linked oxidoreductase family. FAD is required as a cofactor.

It is found in the microsome membrane. The protein localises to the endoplasmic reticulum membrane. The enzyme catalyses L-gulono-1,4-lactone + O2 = L-ascorbate + H2O2 + H(+). It functions in the pathway cofactor biosynthesis; L-ascorbate biosynthesis via UDP-alpha-D-glucuronate pathway; L-ascorbate from UDP-alpha-D-glucuronate: step 4/4. Oxidizes L-gulono-1,4-lactone to hydrogen peroxide and L-xylo-hexulonolactone which spontaneously isomerizes to L-ascorbate. The polypeptide is L-gulonolactone oxidase (GULO) (Scyliorhinus torazame (Cloudy catshark)).